The sequence spans 664 residues: Cytoskeleton-associated protein 2 (664 aa).

The tract at residues 1–38 (MAESRKRFLGRAARNPLPVTRDLQLPPTRRDQPAFREQ) is disordered. Over residues 28 to 38 (TRRDQPAFREQ) the composition is skewed to basic and acidic residues. The segment at 160–319 (PKQDSNVSKK…ASKDAARTDS (160 aa)) is association with alpha- and beta-tubulin. Residue Ser186 is modified to Phosphoserine. Disordered stretches follow at residues 254–273 (IRSL…SRPL), 283–328 (LDKE…MVKP), 366–393 (GKGK…NPVG), and 512–545 (AHAT…KVEV). Over residues 300–309 (GSSQAPSRSI) the composition is skewed to polar residues. Residues 366–375 (GKGKGLKRPP) show a composition bias toward basic residues. A compositionally biased stretch (basic and acidic residues) spans 533 to 545 (PGEENEHHGKVEV). At Thr561 the chain carries Phosphothreonine. Ser577 bears the Phosphoserine mark. Thr579 carries the phosphothreonine modification. Ser584 carries the post-translational modification Phosphoserine.

The protein belongs to the CKAP2 family. In terms of assembly, associates with alpha- and beta-tubulins.

The protein localises to the cytoplasm. The protein resides in the cytoskeleton. It is found in the spindle. It localises to the spindle pole. Functionally, possesses microtubule stabilizing properties. Involved in regulating aneuploidy, cell cycling, and cell death in a p53-dependent manner. The polypeptide is Cytoskeleton-associated protein 2 (Mus musculus (Mouse)).